A 202-amino-acid chain; its full sequence is Type II restriction enzyme MthZI (202 aa).

The enzyme catalyses Endonucleolytic cleavage of DNA to give specific double-stranded fragments with terminal 5'-phosphates.. In terms of biological role, a P subtype restriction enzyme that recognizes the double-stranded sequence 5'-CTAG-3' and cleaves after C-1. The chain is Type II restriction enzyme MthZI from Methanothermobacter thermautotrophicus (Methanobacterium thermoformicicum).